A 283-amino-acid polypeptide reads, in one-letter code: NADPH-dependent 7-cyano-7-deazaguanine reductase (283 aa).

90 to 92 (IES) provides a ligand contact to substrate. An NADPH-binding site is contributed by 92–93 (SK). The Thioimide intermediate role is filled by cysteine 190. The active-site Proton donor is aspartate 197. A substrate-binding site is contributed by 229–230 (HE). Residue 258–259 (RG) participates in NADPH binding.

The protein belongs to the GTP cyclohydrolase I family. QueF type 2 subfamily. As to quaternary structure, homodimer.

The protein resides in the cytoplasm. The catalysed reaction is 7-aminomethyl-7-carbaguanine + 2 NADP(+) = 7-cyano-7-deazaguanine + 2 NADPH + 3 H(+). It functions in the pathway tRNA modification; tRNA-queuosine biosynthesis. Its function is as follows. Catalyzes the NADPH-dependent reduction of 7-cyano-7-deazaguanine (preQ0) to 7-aminomethyl-7-deazaguanine (preQ1). This chain is NADPH-dependent 7-cyano-7-deazaguanine reductase, found in Dechloromonas aromatica (strain RCB).